A 427-amino-acid polypeptide reads, in one-letter code: Glutamate-1-semialdehyde 2,1-aminomutase (427 aa).

K265 is subject to N6-(pyridoxal phosphate)lysine.

The protein belongs to the class-III pyridoxal-phosphate-dependent aminotransferase family. HemL subfamily. In terms of assembly, homodimer. Pyridoxal 5'-phosphate is required as a cofactor.

It localises to the cytoplasm. It catalyses the reaction (S)-4-amino-5-oxopentanoate = 5-aminolevulinate. Its pathway is porphyrin-containing compound metabolism; protoporphyrin-IX biosynthesis; 5-aminolevulinate from L-glutamyl-tRNA(Glu): step 2/2. The sequence is that of Glutamate-1-semialdehyde 2,1-aminomutase from Pseudomonas entomophila (strain L48).